The sequence spans 640 residues: Scarecrow-like protein 27 (640 aa).

2 stretches are compositionally biased toward low complexity: residues 68–79 and 86–98; these read SYSSTTTTLSSS and TVTN…GDDN. The interval 68 to 98 is disordered; that stretch reads SYSSTTTTLSSSHGGGGTTVTNTTVTAGDDN. Positions 259 to 639 constitute a GRAS domain; sequence GMAGDDQSVI…KELVTVSAWK (381 aa). The leucine repeat I (LRI) stretch occupies residues 266 to 331; that stretch reads SVIIEQLFNA…AEALLSLIHN (66 aa). The segment at 350-422 is VHIID; that stretch reads YRSFSETSPF…NRASSLKLTV (73 aa). The VHIID motif lies at 383–387; sequence IHIID. Positions 438–470 are leucine repeat II (LRII); it reads FTEENLKTFAGEVKIPFEIELLSVELLLNPAYW. A PFYRE region spans residues 480 to 565; sequence EAIAVNLPVN…RFWVQPSIEK (86 aa). The segment at 568–639 is SAW; it reads MKRHRWIERS…KELVTVSAWK (72 aa).

The protein belongs to the GRAS family. As to expression, expressed in seedlings, roots, cotyledons, leaves and flowers.

It localises to the nucleus. In terms of biological role, probable transcription factor involved in plant development. The chain is Scarecrow-like protein 27 (SCL27) from Arabidopsis thaliana (Mouse-ear cress).